Consider the following 1480-residue polypeptide: Cystic fibrosis transmembrane conductance regulator (1480 aa).

Over 1-77 (MQRSPLEKAS…KLINALRRCF (77 aa)) the chain is Cytoplasmic. A helical membrane pass occupies residues 78 to 98 (FWRFMFYGIFLYLGEVTKAVQ). The region spanning 81–365 (FMFYGIFLYL…WAVQTWYDSL (285 aa)) is the ABC transmembrane type-1 1 domain. The Extracellular portion of the chain corresponds to 99–122 (PLLLGRIIASYDPDNKEERSIAIY). Residues 123–146 (LGIGLCLLFIVRTLLLHPAIFGLH) traverse the membrane as a helical segment. The Cytoplasmic portion of the chain corresponds to 147–195 (HIGMQMRIAMFSLIYKKTLKLSSRVLDKISIGQLVSLLSNNLNKFDEGL). Residues 196–216 (ALAHFVWIAPLQVALLMGLIW) form a helical membrane-spanning segment. Topologically, residues 217-222 (ELLQAS) are extracellular. A helical transmembrane segment spans residues 223–243 (AFCGLGFLIVLALFQAGLGRM). At 244 to 298 (MMKYRDQRAGKISERLVITSEMIENIQSVKAYCWEEAMEKMIENLRQTELKLTRK) the chain is on the cytoplasmic side. The helical transmembrane segment at 299 to 319 (AAYVRYFNSSAFFFSGFFVVF) threads the bilayer. Over 320–339 (LSVLPYALIKGIILRKIFTT) the chain is Extracellular. Residues 340 to 358 (ISFCIVLRMAVTRQFPWAV) traverse the membrane as a helical segment. At 359 to 858 (QTWYDSLGAI…YLRYITVHKS (500 aa)) the chain is on the cytoplasmic side. ATP-binding positions include W401, S434, 458–465 (GSTGAGKT), and Q493. In terms of domain architecture, ABC transporter 1 spans 423 to 646 (NGDDSLFFSN…QPDFSSKLMG (224 aa)). The S-palmitoyl cysteine moiety is linked to residue C524. S549 bears the Phosphoserine mark. The segment at 654 to 831 (SAERRNSILT…EEINEEDLKE (178 aa)) is disordered R region. Phosphoserine; by PKA occurs at positions 660 and 670. S686 is subject to Phosphoserine; by PKC. A Glycyl lysine isopeptide (Lys-Gly) (interchain with G-Cter in ubiquitin) cross-link involves residue K688. S700 and S712 each carry phosphoserine; by PKA. T717 carries the post-translational modification Phosphothreonine. Residues S737, S753, and S768 each carry the phosphoserine; by PKA modification. S790 is modified (phosphoserine; by PKC). Phosphoserine; by PKA is present on residues S795 and S813. Residues 859–879 (LIFVLIWCLVIFLAEVAASLV) form a helical membrane-spanning segment. Positions 859–1155 (LIFVLIWCLV…AVNSSIDVDS (297 aa)) constitute an ABC transmembrane type-1 2 domain. The Extracellular portion of the chain corresponds to 880 to 918 (VLWLLGNTPLQDKGNSTHSRNNSYAVIITSTSSYYVFYI). N894 and N900 each carry an N-linked (GlcNAc...) asparagine glycan. Residues 919-939 (YVGVADTLLAMGFFRGLPLVH) form a discontinuously helical membrane-spanning segment. Topologically, residues 940 to 990 (TLITVSKILHHKMLHSVLQAPMSTLNTLKAGGILNRFSKDIAILDDLLPLT) are cytoplasmic. The chain crosses the membrane as a helical span at residues 991–1011 (IFDFIQLLLIVIGAIAVVAVL). The Extracellular portion of the chain corresponds to 1012-1013 (QP). A helical transmembrane segment spans residues 1014-1034 (YIFVATVPVIVAFIMLRAYFL). Topologically, residues 1035 to 1095 (QTSQQLKQLE…TANWFLYLST (61 aa)) are cytoplasmic. The helical transmembrane segment at 1096-1116 (LRWFQMRIEMIFVIFFIAVTF) threads the bilayer. Topologically, residues 1117–1130 (ISILTTGEGEGRVG) are extracellular. Residues 1131–1151 (IILTLAMNIMSTLQWAVNSSI) form a helical membrane-spanning segment. At 1152 to 1480 (DVDSLMRSVS…TEEEVQDTRL (329 aa)) the chain is on the cytoplasmic side. Residues 1210-1443 (MTVKDLTAKY…RSLFRQAISP (234 aa)) form the ABC transporter 2 domain. Residues Y1219 and 1244–1251 (GRTGSGKS) contribute to the ATP site. The segment at 1386 to 1480 (RTLKQAFADC…TEEEVQDTRL (95 aa)) is interaction with GORASP2. A lipid anchor (S-palmitoyl cysteine) is attached at C1395. A phosphoserine mark is found at S1444 and S1456. A disordered region spans residues 1452–1480 (HRNSSKCKSKPQIAALKEETEEEVQDTRL). Over residues 1470-1480 (ETEEEVQDTRL) the composition is skewed to acidic residues. The PDZ-binding signature appears at 1478–1480 (TRL).

The protein belongs to the ABC transporter superfamily. ABCC family. CFTR transporter (TC 3.A.1.202) subfamily. As to quaternary structure, monomer; does not require oligomerization for channel activity. May form oligomers in the membrane. Interacts with SLC26A3, SLC26A6 and SHANK2. Interacts with NHERF1 and MYO6. Interacts (via C-terminus) with GOPC (via PDZ domain); this promotes CFTR internalization and thereby decreases channel activity. Interacts with SLC4A7 through NHERF1. Found in a complex with MYO5B and RAB11A. Interacts with ANO1. Interacts with SLC26A8. Interacts with AHCYL1; the interaction increases CFTR activity. Interacts with CSE1L. The core-glycosylated form interacts with GORASP2 (via PDZ GRASP-type 1 domain) in respone to ER stress. Interacts with MARCHF2; the interaction leads to CFTR ubiqtuitination and degradation. Interacts with ADGRG2. N-glycosylated. Post-translationally, phosphorylated; cAMP treatment promotes phosphorylation and activates the channel. Dephosphorylation decreases the ATPase activity (in vitro). Phosphorylation at PKA sites activates the channel. Phosphorylation at PKC sites enhances the response to phosphorylation by PKA. Phosphorylated by AMPK; this inhibits channel activity. In terms of processing, ubiquitinated, leading to its degradation in the lysosome. Deubiquitination by USP10 in early endosomes enhances its endocytic recycling to the cell membrane. Ubiquitinated by RNF185 during ER stress. Ubiquitinated by MARCHF2. In terms of tissue distribution, expressed in the respiratory airway, including bronchial epithelium, and in the female reproductive tract, including oviduct (at protein level). Detected in pancreatic intercalated ducts in the exocrine tissue, on epithelial cells in intralobular striated ducts in sublingual salivary glands, on apical membranes of crypt cells throughout the small and large intestine, and on the reabsorptive duct in eccrine sweat glands. Detected on the equatorial segment of the sperm head (at protein level). Detected in nasal and bronchial superficial epithelium. Expressed by the central cells on the sebaceous glands, dermal adipocytes and, at lower levels, by epithelial cells.

It is found in the apical cell membrane. The protein localises to the early endosome membrane. Its subcellular location is the cell membrane. The protein resides in the recycling endosome membrane. It localises to the endoplasmic reticulum membrane. It is found in the nucleus. It catalyses the reaction ATP + H2O + closed Cl(-) channel = ADP + phosphate + open Cl(-) channel.. It carries out the reaction chloride(in) = chloride(out). The catalysed reaction is hydrogencarbonate(in) = hydrogencarbonate(out). The enzyme catalyses ATP + H2O = ADP + phosphate + H(+). Its function is as follows. Epithelial ion channel that plays an important role in the regulation of epithelial ion and water transport and fluid homeostasis. Mediates the transport of chloride ions across the cell membrane. Possesses an intrinsic ATPase activity and utilizes ATP to gate its channel; the passive flow of anions through the channel is gated by cycles of ATP binding and hydrolysis by the ATP-binding domains. The ion channel is also permeable to HCO(3)(-); selectivity depends on the extracellular chloride concentration. In vitro, mediates ATP-dependent glutathione flux. Exerts its function also by modulating the activity of other ion channels and transporters. Plays an important role in airway fluid homeostasis. Contributes to the regulation of the pH and the ion content of the airway surface fluid layer and thereby plays an important role in defense against pathogens. Modulates the activity of the epithelial sodium channel (ENaC) complex, in part by regulating the cell surface expression of the ENaC complex. Inhibits the activity of the ENaC channel containing subunits SCNN1A, SCNN1B and SCNN1G. Inhibits the activity of the ENaC channel containing subunits SCNN1D, SCNN1B and SCNN1G, but not of the ENaC channel containing subunits SCNN1A, SCNN1B and SCNN1G. May regulate bicarbonate secretion and salvage in epithelial cells by regulating the transporter SLC4A7. Can inhibit the chloride channel activity of ANO1. Plays a role in the chloride and bicarbonate homeostasis during sperm epididymal maturation and capacitation. In Homo sapiens (Human), this protein is Cystic fibrosis transmembrane conductance regulator.